We begin with the raw amino-acid sequence, 330 residues long: 5'-AMP-activated protein kinase subunit gamma-1 (330 aa).

Positions 1–13 are enriched in polar residues; the sequence is METVTSSDSSSAV. Residues 1 to 26 are disordered; that stretch reads METVTSSDSSSAVENEHPQDTPESNN. CBS domains lie at 43-103, 125-187, and 198-260; these read PTSS…KSAL, SFKP…PKPE, and IGTY…NLDV. ADP is bound by residues arginine 70, 85 to 90, valine 130, 151 to 152, and lysine 170; these read MLTITD and HR. AMP contacts are provided by residues arginine 70, 85–90, valine 130, histidine 151, 151–152, lysine 170, threonine 200, alanine 205, 226–227, and 242–245; these read MLTITD, HR, SA, and SKFD. ATP is bound by residues arginine 70, 85–90, valine 130, 151–152, arginine 152, and lysine 170; these read MLTITD and HR. Residues 138–159 carry the AMPK pseudosubstrate motif; sequence LFDAVSSLIRNKIHRLPVIDPE. An ADP-binding site is contributed by 242–245; the sequence is SKFD. 242–245 is a binding site for ATP; the sequence is SKFD. Serine 261 carries the post-translational modification Phosphoserine; by ULK1. A Phosphothreonine; by ULK1 modification is found at threonine 263. Residue arginine 269 coordinates ADP. Arginine 269 lines the AMP pocket. Arginine 269 is an ATP binding site. Position 270 is a phosphoserine; by ULK1 (serine 270). The CBS 4 domain occupies 272–329; it reads YFEGVLKCYLHETLETIINRLVEAEVHRLVVVDENDVVKGIVSLSDILQALVLTGGEK. ADP is bound by residues leucine 277 and 298-299; that span reads HR. Residues leucine 277, histidine 298, 298 to 299, and 314 to 317 each bind AMP; these read HR and SLSD. ATP contacts are provided by residues leucine 277 and 298-299; that span reads HR.

This sequence belongs to the 5'-AMP-activated protein kinase gamma subunit family. As to quaternary structure, AMPK is a heterotrimer of an alpha catalytic subunit (PRKAA1 or PRKAA2), a beta (PRKAB1 or PRKAB2) and a gamma non-catalytic subunits (PRKAG1, PRKAG2 or PRKAG3). Interacts with FNIP1 and FNIP2. Phosphorylated by ULK1 and ULK2; leading to negatively regulate AMPK activity and suggesting the existence of a regulatory feedback loop between ULK1, ULK2 and AMPK. In terms of processing, glycosylated; O-GlcNAcylated by OGT, promoting the AMP-activated protein kinase (AMPK) activity.

AMP/ATP-binding subunit of AMP-activated protein kinase (AMPK), an energy sensor protein kinase that plays a key role in regulating cellular energy metabolism. In response to reduction of intracellular ATP levels, AMPK activates energy-producing pathways and inhibits energy-consuming processes: inhibits protein, carbohydrate and lipid biosynthesis, as well as cell growth and proliferation. AMPK acts via direct phosphorylation of metabolic enzymes, and by longer-term effects via phosphorylation of transcription regulators. Also acts as a regulator of cellular polarity by remodeling the actin cytoskeleton; probably by indirectly activating myosin. Gamma non-catalytic subunit mediates binding to AMP, ADP and ATP, leading to activate or inhibit AMPK: AMP-binding results in allosteric activation of alpha catalytic subunit (PRKAA1 or PRKAA2) both by inducing phosphorylation and preventing dephosphorylation of catalytic subunits. ADP also stimulates phosphorylation, without stimulating already phosphorylated catalytic subunit. ATP promotes dephosphorylation of catalytic subunit, rendering the AMPK enzyme inactive. This Sus scrofa (Pig) protein is 5'-AMP-activated protein kinase subunit gamma-1 (PRKAG1).